We begin with the raw amino-acid sequence, 184 residues long: Gremlin-1 (184 aa).

The signal sequence occupies residues Met-1–Gly-24. The segment at Gly-24–Ser-77 is disordered. The N-linked (GlcNAc...) asparagine glycan is linked to Asn-44. Polar residues predominate over residues Asp-45–Gly-56. Disulfide bonds link Cys-94-Cys-144, Cys-108-Cys-158, Cys-118-Cys-176, and Cys-122-Cys-178. The CTCK domain occupies Cys-94 to Asp-184.

This sequence belongs to the DAN family.

The protein localises to the secreted. Functionally, cytokine that may play a role in the development of the medial pallium and during optic nerve and pecten development by modulating BMP signaling. The chain is Gremlin-1 (GREM1) from Gallus gallus (Chicken).